We begin with the raw amino-acid sequence, 478 residues long: Dynein regulatory complex subunit 4 (478 aa).

The segment covering Met1–Ala12 has biased composition (basic residues). The segment at Met1–Glu33 is disordered. Residues Met1 to Thr114 form a regulates microtubule-binding region. A microtubule-binding region spans residues Glu115–Met258. Residues Leu242–Val427 are a coiled coil. Residues Gln357–Thr478 are interaction with SMO.

The protein belongs to the DRC4 family. Component of the nexin-dynein regulatory complex (N-DRC). Interacts with microtubules. Interacts with SMO. Interacts (via coiled-coil domains) with RAB3B (in GTP-bound form). Interacts with DRC1. Interacts with DRC7. In terms of tissue distribution, expressed in respiratory epithelial cells (at protein level). Expressed in the heart, skeletal muscle, pancreas, liver, brain, trachea and lung. Weakly or not expressed in placenta and kidney.

The protein localises to the cytoplasm. It localises to the cytoskeleton. It is found in the cell projection. Its subcellular location is the cilium. The protein resides in the flagellum. The protein localises to the cilium axoneme. It localises to the cilium basal body. It is found in the golgi apparatus. Its subcellular location is the flagellum axoneme. Its function is as follows. Component of the nexin-dynein regulatory complex (N-DRC), a key regulator of ciliary/flagellar motility which maintains the alignment and integrity of the distal axoneme and regulates microtubule sliding in motile axonemes. Plays an important role in the assembly of the N-DRC linker. Plays dual roles at both the primary (or non-motile) cilia to regulate hedgehog signaling and in motile cilia to coordinate cilia movement. Required for proper motile cilia functioning. Positively regulates ciliary smoothened (SMO)-dependent Hedgehog (Hh) signaling pathway by facilitating the trafficking of SMO into the cilium and the stimulation of SMO activity in a GRK2-dependent manner. This Homo sapiens (Human) protein is Dynein regulatory complex subunit 4 (GAS8).